The primary structure comprises 295 residues: Regucalcin (295 aa).

An a divalent metal cation-binding site is contributed by Glu18. Arg100, Asn102, and Asp120 together coordinate substrate. A divalent metal cation is bound by residues Asn150 and Asp200. Asp200 serves as the catalytic Proton donor/acceptor.

It belongs to the SMP-30/CGR1 family. Requires Zn(2+) as cofactor. Mn(2+) is required as a cofactor. Ca(2+) serves as cofactor. It depends on Mg(2+) as a cofactor.

The protein resides in the cytoplasm. The enzyme catalyses D-glucono-1,5-lactone + H2O = D-gluconate + H(+). The protein operates within cofactor biosynthesis; L-ascorbate biosynthesis via UDP-alpha-D-glucuronate pathway; L-ascorbate from UDP-alpha-D-glucuronate: step 3/4. Its function is as follows. Gluconolactonase with low activity towards other sugar lactones, including gulonolactone and galactonolactone. Catalyzes a key step in ascorbic acid (vitamin C) biosynthesis. Can also hydrolyze diisopropyl phosphorofluoridate and phenylacetate (in vitro). Calcium-binding protein. Modulates Ca(2+) signaling, and Ca(2+)-dependent cellular processes and enzyme activities. This is Regucalcin from Danio rerio (Zebrafish).